We begin with the raw amino-acid sequence, 136 residues long: Antistasin (136 aa).

The N-terminal stretch at 1 to 17 (MIKLAILLLFTVAIVRC) is a signal peptide. Q18 carries the post-translational modification Pyrrolidone carboxylic acid. Disulfide bonds link C25/C36, C30/C43, C45/C65, C50/C68, C54/C70, C79/C90, C84/C97, C99/C120, C105/C123, and C109/C125. In terms of domain architecture, Antistasin-like 1 spans 45 to 70 (CSGVRCRMHCPHGFQRSRYGCEFCKC). The Antistasin-like 2 domain occupies 100–125 (KIDINCRKTCPNGLKRDKLGCEYCEC). Heparin is bound by residues 114-117 (KRDK) and 128-135 (KRKLIPRL).

The protein belongs to the protease inhibitor I15 (antistasin) family.

It is found in the secreted. In terms of biological role, this highly disulfide-bonded protein is a potent inhibitor of factor Xa. May have therapeutic utility as an anticoagulant. Also exhibits a strong metastatic activity. This is Antistasin from Haementeria officinalis (Mexican leech).